Here is a 165-residue protein sequence, read N- to C-terminus: Phosphopantetheine adenylyltransferase (165 aa).

Position 11 (T11) interacts with substrate. Residues 11–12 (TF) and H19 each bind ATP. Residues K43, T79, and R93 each contribute to the substrate site. ATP contacts are provided by residues E104 and 128-134 (LEPLNST).

This sequence belongs to the bacterial CoaD family. As to quaternary structure, homohexamer. It depends on Mg(2+) as a cofactor.

It localises to the cytoplasm. It catalyses the reaction (R)-4'-phosphopantetheine + ATP + H(+) = 3'-dephospho-CoA + diphosphate. Its pathway is cofactor biosynthesis; coenzyme A biosynthesis; CoA from (R)-pantothenate: step 4/5. Reversibly transfers an adenylyl group from ATP to 4'-phosphopantetheine, yielding dephospho-CoA (dPCoA) and pyrophosphate. The polypeptide is Phosphopantetheine adenylyltransferase (Lactococcus lactis subsp. lactis (strain IL1403) (Streptococcus lactis)).